Consider the following 872-residue polypeptide: MKVTAVSSVLLTVAALTNANEIDKRSFFGDLFSGLTGSKAAAPAAAPAAQPAAQPTTQSPADQPTVQSPVSSDQPSTAQPVAQNNLLLDSSNSTLVVPSSSKSSTTTRSTAGLLDNLLGGSGATSSEASSSEAPSSEAPSSEAPSSEAPSSEAPSSEAPSSSSSEALSSSSTTKRPTAAAKGFFGDLFGTQSSASETDDEDCVEETESPTSAPASAPTTSKVATTTGGGLPNILSDLFPGKSSAPISSAESSPTVASSTTGFPNILSDLFPGKSSVPSSSAETSTTVASNTTTSGGGFPNILSDLFPGKSSVPSSSAEEDDEECEDPTESVTSNSSPTGGISIPTFPITSQSKTSVSSVVSKSTSEDDDDETECETDIPTIIPSGSVLPTTSVLPTIIPTGSGSITILPTKSATSDDDDDETDCETDIPTIVPTESATIIPTGSGSVTIIPTGSGSITVLPTKSATSDDDDDETDCETDIPTIIPTGTATIKPTGSGSITVLPTKSTTTDDDDDETDCETEIPTIHPTVSTTRTFTSDGVPTTQTLTTKLPPTTNQHTETEVVSITYTGGGQTFTTYLTQSGEICDETVTLTITTTCPSTTVAPGGQIYTTTVTVITTHTVYPDDWEDDGYEGEDNAGGSASGSSDDGEWEWYEEDDGECVPTGGSSSGSGTGSWWGSGAGSSGGTTSGSGSGSSSNSGASSGGTWGGSGNDYVCPGEEGYDDEEPDNGGSWWGGSGSGSSSGSSSGVSSGDSGSSSVTGGSSGSWWGGSGNDYVCPGEDGYDDEDDQTPEPECDDEDDSWDDDEECDTQAAKEVVNSVTVAAESVYPSTTAASLTTSWISTQTAQSVTQIENIGGKVSASGLFVVLGLLLI.

A signal peptide spans 1-19 (MKVTAVSSVLLTVAALTNA). Low complexity predominate over residues 43 to 65 (PAAAPAAQPAAQPTTQSPADQPT). Disordered regions lie at residues 43-383 (PAAA…TIIP), 492-517 (KPTG…DETD), and 623-809 (PDDW…ECDT). The span at 66–83 (VQSPVSSDQPSTAQPVAQ) shows a compositional bias: polar residues. Low complexity-rich tracts occupy residues 84–110 (NNLL…TRST) and 125–171 (SSEA…SSSS). An N-linked (GlcNAc...) asparagine glycan is attached at Asn-92. The span at 196-207 (ETDDEDCVEETE) shows a compositional bias: acidic residues. 3 stretches are compositionally biased toward low complexity: residues 208–225 (SPTS…VATT), 242–260 (SSAP…SSTT), and 274–293 (SSVP…NTTT). The N-linked (GlcNAc...) asparagine glycan is linked to Asn-290. Over residues 317-328 (AEEDDEECEDPT) the composition is skewed to acidic residues. Residues 349-363 (TSQSKTSVSSVVSKS) show a composition bias toward low complexity. Positions 366–376 (EDDDDETECET) are enriched in acidic residues. The segment covering 495–506 (GSGSITVLPTKS) has biased composition (polar residues). Composition is skewed to acidic residues over residues 624–635 (DDWEDDGYEGED) and 646–659 (DDGE…DDGE). Composition is skewed to gly residues over residues 666–692 (SSSG…GSGS), 701–710 (SSGGTWGGSG), and 731–740 (SWWGGSGSGS). The span at 741-760 (SSGSSSGVSSGDSGSSSVTG) shows a compositional bias: low complexity. Positions 761-771 (GSSGSWWGGSG) are enriched in gly residues. The segment covering 780–808 (DGYDDEDDQTPEPECDDEDDSWDDDEECD) has biased composition (acidic residues). Ala-845 carries GPI-anchor amidated alanine lipidation. The propeptide at 846-872 (QSVTQIENIGGKVSASGLFVVLGLLLI) is removed in mature form.

This sequence belongs to the HYR1/IFF family. Post-translationally, the GPI-anchor is attached to the protein in the endoplasmic reticulum and serves to target the protein to the cell surface. There, the glucosamine-inositol phospholipid moiety is cleaved off and the GPI-modified mannoprotein is covalently attached via its lipidless GPI glycan remnant to the 1,6-beta-glucan of the outer cell wall layer.

The protein localises to the secreted. Its subcellular location is the cell wall. The protein resides in the membrane. In terms of biological role, probable GPI-anchored cell wall protein involved in cell wall organization, hyphal growth, as well as in host-fungal interaction and virulence. The chain is Probable GPI-anchored adhesin-like protein PGA25 (PGA25) from Candida albicans (strain SC5314 / ATCC MYA-2876) (Yeast).